The primary structure comprises 241 residues: Small ribosomal subunit protein eS4 (241 aa).

Positions 43–105 (IPLVMVLRDI…INKTFRVLQD (63 aa)) constitute an S4 RNA-binding domain.

It belongs to the eukaryotic ribosomal protein eS4 family.

The sequence is that of Small ribosomal subunit protein eS4 from Methanosphaera stadtmanae (strain ATCC 43021 / DSM 3091 / JCM 11832 / MCB-3).